Reading from the N-terminus, the 364-residue chain is Spermidine/putrescine import ATP-binding protein PotA (364 aa).

Residues 5–235 (LSLKSVSKSY…PVNRFVADFI (231 aa)) form the ABC transporter domain. 37-44 (GPSGCGKT) contacts ATP.

This sequence belongs to the ABC transporter superfamily. Spermidine/putrescine importer (TC 3.A.1.11.1) family. In terms of assembly, the complex is composed of two ATP-binding proteins (PotA), two transmembrane proteins (PotB and PotC) and a solute-binding protein (PotD).

It localises to the cell membrane. It catalyses the reaction ATP + H2O + polyamine-[polyamine-binding protein]Side 1 = ADP + phosphate + polyamineSide 2 + [polyamine-binding protein]Side 1.. In terms of biological role, part of the ABC transporter complex PotABCD involved in spermidine/putrescine import. Responsible for energy coupling to the transport system. This is Spermidine/putrescine import ATP-binding protein PotA from Staphylococcus aureus (strain USA300).